Consider the following 291-residue polypeptide: Bis(5'-nucleosyl)-tetraphosphatase, symmetrical (291 aa).

Belongs to the Ap4A hydrolase family.

It carries out the reaction P(1),P(4)-bis(5'-adenosyl) tetraphosphate + H2O = 2 ADP + 2 H(+). Hydrolyzes diadenosine 5',5'''-P1,P4-tetraphosphate to yield ADP. This chain is Bis(5'-nucleosyl)-tetraphosphatase, symmetrical, found in Pseudomonas syringae pv. syringae (strain B728a).